A 432-amino-acid chain; its full sequence is Trigger factor (432 aa).

The PPIase FKBP-type domain maps to 161–246 (EDRVTIDFTG…LKKVEERELP (86 aa)).

Belongs to the FKBP-type PPIase family. Tig subfamily.

It is found in the cytoplasm. The catalysed reaction is [protein]-peptidylproline (omega=180) = [protein]-peptidylproline (omega=0). Involved in protein export. Acts as a chaperone by maintaining the newly synthesized protein in an open conformation. Functions as a peptidyl-prolyl cis-trans isomerase. The protein is Trigger factor of Klebsiella pneumoniae subsp. pneumoniae (strain ATCC 700721 / MGH 78578).